Reading from the N-terminus, the 262-residue chain is Type III pantothenate kinase (262 aa).

7-14 (DIGNTRLK) provides a ligand contact to ATP. Residues Tyr96 and 103–106 (GSDR) contribute to the substrate site. The active-site Proton acceptor is Asp105. Residue Thr137 participates in ATP binding. Position 187 (Thr187) interacts with substrate.

Belongs to the type III pantothenate kinase family. In terms of assembly, homodimer. It depends on NH4(+) as a cofactor. The cofactor is K(+).

It localises to the cytoplasm. The catalysed reaction is (R)-pantothenate + ATP = (R)-4'-phosphopantothenate + ADP + H(+). It participates in cofactor biosynthesis; coenzyme A biosynthesis; CoA from (R)-pantothenate: step 1/5. In terms of biological role, catalyzes the phosphorylation of pantothenate (Pan), the first step in CoA biosynthesis. The protein is Type III pantothenate kinase of Leptothrix cholodnii (strain ATCC 51168 / LMG 8142 / SP-6) (Leptothrix discophora (strain SP-6)).